A 378-amino-acid polypeptide reads, in one-letter code: Ribosomal RNA large subunit methyltransferase G (378 aa).

This sequence belongs to the methyltransferase superfamily. RlmG family.

It localises to the cytoplasm. The catalysed reaction is guanosine(1835) in 23S rRNA + S-adenosyl-L-methionine = N(2)-methylguanosine(1835) in 23S rRNA + S-adenosyl-L-homocysteine + H(+). Functionally, specifically methylates the guanine in position 1835 (m2G1835) of 23S rRNA. This Enterobacter sp. (strain 638) protein is Ribosomal RNA large subunit methyltransferase G.